The chain runs to 270 residues: 3-methyl-2-oxobutanoate hydroxymethyltransferase (270 aa).

Residues aspartate 50 and aspartate 89 each contribute to the Mg(2+) site. 3-methyl-2-oxobutanoate is bound by residues 50–51 (DS), aspartate 89, and lysine 118. Glutamate 120 is a Mg(2+) binding site. Residue glutamate 187 is the Proton acceptor of the active site.

Belongs to the PanB family. In terms of assembly, homodecamer; pentamer of dimers. The cofactor is Mg(2+).

The protein resides in the cytoplasm. The enzyme catalyses 3-methyl-2-oxobutanoate + (6R)-5,10-methylene-5,6,7,8-tetrahydrofolate + H2O = 2-dehydropantoate + (6S)-5,6,7,8-tetrahydrofolate. It participates in cofactor biosynthesis; (R)-pantothenate biosynthesis; (R)-pantoate from 3-methyl-2-oxobutanoate: step 1/2. Its function is as follows. Catalyzes the reversible reaction in which hydroxymethyl group from 5,10-methylenetetrahydrofolate is transferred onto alpha-ketoisovalerate to form ketopantoate. This chain is 3-methyl-2-oxobutanoate hydroxymethyltransferase, found in Helicobacter acinonychis (strain Sheeba).